Here is a 37-residue protein sequence, read N- to C-terminus: Large ribosomal subunit protein bL36 (37 aa).

It belongs to the bacterial ribosomal protein bL36 family.

This Symbiobacterium thermophilum (strain DSM 24528 / JCM 14929 / IAM 14863 / T) protein is Large ribosomal subunit protein bL36.